The following is an 83-amino-acid chain: Putative regulatory protein FMG_0656 (83 aa).

The protein belongs to the RemA family.

This Finegoldia magna (strain ATCC 29328 / DSM 20472 / WAL 2508) (Peptostreptococcus magnus) protein is Putative regulatory protein FMG_0656.